A 405-amino-acid chain; its full sequence is Probable glucan 1,3-beta-glucosidase A (405 aa).

The signal sequence occupies residues 1-26 (MFPRISQAAILAHSLLAVCTSAATLA). The active-site Proton donor is glutamate 198. 2 disulfide bridges follow: cysteine 278–cysteine 403 and cysteine 304–cysteine 330. Glutamate 296 acts as the Nucleophile in catalysis.

Belongs to the glycosyl hydrolase 5 (cellulase A) family. As to quaternary structure, monomer. It depends on Mn(2+) as a cofactor.

It localises to the secreted. It carries out the reaction Successive hydrolysis of beta-D-glucose units from the non-reducing ends of (1-&gt;3)-beta-D-glucans, releasing alpha-glucose.. In terms of biological role, beta-glucanases participate in the metabolism of beta-glucan, the main structural component of the cell wall. It could also function biosynthetically as a transglycosylase. In Emericella nidulans (strain FGSC A4 / ATCC 38163 / CBS 112.46 / NRRL 194 / M139) (Aspergillus nidulans), this protein is Probable glucan 1,3-beta-glucosidase A (exgA).